The sequence spans 261 residues: Cytochrome c oxidase subunit 3 (261 aa).

Over 1 to 15 (MTHQTHAYHMVNPSP) the chain is Mitochondrial matrix. The chain crosses the membrane as a helical span at residues 16–34 (WPLTGALSALLMTSGLIMW). The Mitochondrial intermembrane segment spans residues 35–40 (FHYNSM). The helical transmembrane segment at 41-66 (ALLTLGFTTNLLTMYQWWRDVIREGT) threads the bilayer. Residues 67-72 (FQGHHT) are Mitochondrial matrix-facing. The helical transmembrane segment at 73–105 (PIVQKGLRYGMVLFIVSEVFFFAGFFWAFYHSS) threads the bilayer. The Mitochondrial intermembrane segment spans residues 106-128 (LAPTPELGGCWPPTGIIPLNPLE). Residues 129–152 (VPLLNTSVLLASGVSITWAHHSLM) form a helical membrane-spanning segment. The Mitochondrial matrix segment spans residues 153 to 155 (EGN). Residues 156 to 183 (RKHMLQALFITISLGVYFTLLQASEYYE) traverse the membrane as a helical segment. The Mitochondrial intermembrane segment spans residues 184-190 (TSFTISD). The chain crosses the membrane as a helical span at residues 191-223 (GVYGSTFFMATGFHGLHVIIGSTFLIVCFLRQL). Residues 224 to 232 (YYHFTSNHH) are Mitochondrial matrix-facing. A helical membrane pass occupies residues 233-256 (FGFEAAAWYWHFVDVVWLFLYVSI). Over 257–261 (YWWGS) the chain is Mitochondrial intermembrane.

This sequence belongs to the cytochrome c oxidase subunit 3 family. In terms of assembly, component of the cytochrome c oxidase (complex IV, CIV), a multisubunit enzyme composed of 14 subunits. The complex is composed of a catalytic core of 3 subunits MT-CO1, MT-CO2 and MT-CO3, encoded in the mitochondrial DNA, and 11 supernumerary subunits COX4I, COX5A, COX5B, COX6A, COX6B, COX6C, COX7A, COX7B, COX7C, COX8 and NDUFA4, which are encoded in the nuclear genome. The complex exists as a monomer or a dimer and forms supercomplexes (SCs) in the inner mitochondrial membrane with NADH-ubiquinone oxidoreductase (complex I, CI) and ubiquinol-cytochrome c oxidoreductase (cytochrome b-c1 complex, complex III, CIII), resulting in different assemblies (supercomplex SCI(1)III(2)IV(1) and megacomplex MCI(2)III(2)IV(2)).

Its subcellular location is the mitochondrion inner membrane. It catalyses the reaction 4 Fe(II)-[cytochrome c] + O2 + 8 H(+)(in) = 4 Fe(III)-[cytochrome c] + 2 H2O + 4 H(+)(out). Functionally, component of the cytochrome c oxidase, the last enzyme in the mitochondrial electron transport chain which drives oxidative phosphorylation. The respiratory chain contains 3 multisubunit complexes succinate dehydrogenase (complex II, CII), ubiquinol-cytochrome c oxidoreductase (cytochrome b-c1 complex, complex III, CIII) and cytochrome c oxidase (complex IV, CIV), that cooperate to transfer electrons derived from NADH and succinate to molecular oxygen, creating an electrochemical gradient over the inner membrane that drives transmembrane transport and the ATP synthase. Cytochrome c oxidase is the component of the respiratory chain that catalyzes the reduction of oxygen to water. Electrons originating from reduced cytochrome c in the intermembrane space (IMS) are transferred via the dinuclear copper A center (CU(A)) of subunit 2 and heme A of subunit 1 to the active site in subunit 1, a binuclear center (BNC) formed by heme A3 and copper B (CU(B)). The BNC reduces molecular oxygen to 2 water molecules using 4 electrons from cytochrome c in the IMS and 4 protons from the mitochondrial matrix. The polypeptide is Cytochrome c oxidase subunit 3 (MT-CO3) (Canis lupus familiaris (Dog)).